The following is a 946-amino-acid chain: Bifunctional glutamine synthetase adenylyltransferase/adenylyl-removing enzyme (946 aa).

The interval 1-440 (MKPLSSPLQQ…VFNELIGDDE (440 aa)) is adenylyl removase. The segment at 449 to 946 (SEQWRELWQD…ASWQKWLVEE (498 aa)) is adenylyl transferase.

Belongs to the GlnE family. It depends on Mg(2+) as a cofactor.

It catalyses the reaction [glutamine synthetase]-O(4)-(5'-adenylyl)-L-tyrosine + phosphate = [glutamine synthetase]-L-tyrosine + ADP. The catalysed reaction is [glutamine synthetase]-L-tyrosine + ATP = [glutamine synthetase]-O(4)-(5'-adenylyl)-L-tyrosine + diphosphate. Functionally, involved in the regulation of glutamine synthetase GlnA, a key enzyme in the process to assimilate ammonia. When cellular nitrogen levels are high, the C-terminal adenylyl transferase (AT) inactivates GlnA by covalent transfer of an adenylyl group from ATP to specific tyrosine residue of GlnA, thus reducing its activity. Conversely, when nitrogen levels are low, the N-terminal adenylyl removase (AR) activates GlnA by removing the adenylyl group by phosphorolysis, increasing its activity. The regulatory region of GlnE binds the signal transduction protein PII (GlnB) which indicates the nitrogen status of the cell. In Shigella boydii serotype 18 (strain CDC 3083-94 / BS512), this protein is Bifunctional glutamine synthetase adenylyltransferase/adenylyl-removing enzyme.